Here is a 473-residue protein sequence, read N- to C-terminus: Hyaluronidase-2 (473 aa).

Residues 1–20 form the signal peptide; the sequence is MRAGPGPTVTLALVLAVSWA. 2 disulfides stabilise this stretch: Cys47–Cys340 and Cys211–Cys227. 2 N-linked (GlcNAc...) asparagine glycosylation sites follow: Asn74 and Asn103. Catalysis depends on Glu135, which acts as the Proton donor. A glycan (N-linked (GlcNAc...) asparagine) is linked at Asn357. An EGF-like domain is found at 361 to 439; the sequence is ATQYCSRAQC…YLGWSGEQCQ (79 aa). Disulfide bonds link Cys365/Cys376, Cys370/Cys427, and Cys429/Cys438. Gly448 carries GPI-anchor amidated glycine lipidation. Positions 449-473 are cleaved as a propeptide — removed in mature form; it reads ASEAWAGSHLTSLLALAALAFTWTL.

Belongs to the glycosyl hydrolase 56 family. As to quaternary structure, interacts with MST1R. In terms of tissue distribution, widely expressed (at protein level).

The protein resides in the cell membrane. The enzyme catalyses Random hydrolysis of (1-&gt;4)-linkages between N-acetyl-beta-D-glucosamine and D-glucuronate residues in hyaluronate.. In terms of biological role, catalyzes hyaluronan degradation into small fragments that are endocytosed and degraded in lysosomes by HYAL1 and exoglycosidases. Essential for the breakdown of extracellular matrix hyaluronan. The sequence is that of Hyaluronidase-2 (HYAL2) from Homo sapiens (Human).